The following is a 180-amino-acid chain: Probable cobalt-precorrin-6B C(15)-methyltransferase (decarboxylating) (180 aa).

S-adenosyl-L-methionine contacts are provided by residues Thr-16, 40-44, Asp-61, and Ala-89; that span reads GCGSG.

The protein belongs to the methyltransferase superfamily. Archaeal-type CbiT family.

The catalysed reaction is Co-precorrin-6B + S-adenosyl-L-methionine = Co-precorrin-7 + S-adenosyl-L-homocysteine + CO2. Its pathway is cofactor biosynthesis; adenosylcobalamin biosynthesis; cob(II)yrinate a,c-diamide from sirohydrochlorin (anaerobic route): step 8/10. Functionally, catalyzes the methylation of C-15 in cobalt-precorrin-6B followed by the decarboxylation of C-12 to form cobalt-precorrin-7. In Methanococcus vannielii (strain ATCC 35089 / DSM 1224 / JCM 13029 / OCM 148 / SB), this protein is Probable cobalt-precorrin-6B C(15)-methyltransferase (decarboxylating).